The chain runs to 562 residues: Protein wntless (562 aa).

Residues 1–13 (MSGTILENLSGRK) lie on the Cytoplasmic side of the membrane. Residues 14 to 34 (LSILVGSLLLCQVLCFLLGGL) traverse the membrane as a helical segment. Residues 35–239 (YAPVPAGHTN…AIHQNGGFTH (205 aa)) lie on the Lumenal side of the membrane. N-linked (GlcNAc...) asparagine glycosylation is present at Asn58. A helical membrane pass occupies residues 240 to 260 (VWLMLKTLLFPFVVGIMVWFW). Residues 261 to 270 (RRVHLLQRSP) are Cytoplasmic-facing. Residues 271–291 (ALLEYMLLYLGGALTFLNLPL) traverse the membrane as a helical segment. Over 292 to 311 (EYLSLTIEMPYMLLLSDIRQ) the chain is Lumenal. A helical transmembrane segment spans residues 312-332 (GIFYAMLLSFWLVFAGEHMLI). The Cytoplasmic segment spans residues 333–344 (QDSHNKSTIRSR). A helical membrane pass occupies residues 345-365 (YWKHLSAVVVGCISLFVFDIS). At 366–386 (ERGVQLRNPFYSIWTTPLGAK) the chain is on the lumenal side. The helical transmembrane segment at 387–407 (VAMSFILLAGVSAAVYFLFLC) threads the bilayer. At 408–441 (YMISKVFKNIGDKRTSLPSMSQARRLHYEGLIYR) the chain is on the cytoplasmic side. Residues 442–462 (FKFLMLATLLCAALTVTGFIM) traverse the membrane as a helical segment. Residues 463-482 (GQMAEGQWKWNDDVEIQLTS) are Lumenal-facing. The chain crosses the membrane as a helical span at residues 483–503 (AFLTGVYGMWNIYIFALLILY). Residues 504 to 562 (APSHKQWPTMHHSDETTQSNENIVASAASEEIEFSNLPSDSNPSEISSLTSFTRKVAFE) are Cytoplasmic-facing. The tract at residues 538-562 (SNLPSDSNPSEISSLTSFTRKVAFE) is disordered. The span at 539–556 (NLPSDSNPSEISSLTSFT) shows a compositional bias: polar residues.

The protein belongs to the wntless family. Interacts with wg; in the Golgi. Interacts with Vps35, a component of the retromer complex; wls stability is regulated by Vps35.

Its subcellular location is the presynaptic cell membrane. It localises to the postsynaptic cell membrane. It is found in the cell membrane. The protein resides in the endoplasmic reticulum membrane. The protein localises to the endosome membrane. Its subcellular location is the golgi apparatus membrane. A segment polarity gene required for wingless (wg)-dependent patterning processes, acting in both wg-sending cells and wg-target cells. In non-neuronal cells wls directs wg secretion. The wls traffic loop encompasses the Golgi, the cell surface, an endocytic compartment and a retrograde route leading back to the Golgi, and involves clathrin-mediated endocytosis and the retromer complex (a conserved protein complex consisting of Vps35 and Vps26). In neuronal cells (the larval motorneuron NMJ), the wg signal moves across the synapse via the release of wls-containing exosome-like vesicles. Postsynaptic wls is required for the trafficking of fz2 through the fz2-interacting protein Grip. This Drosophila persimilis (Fruit fly) protein is Protein wntless.